Consider the following 316-residue polypeptide: Pantothenate kinase (316 aa).

95-102 (GSVAVGKS) contributes to the ATP binding site.

This sequence belongs to the prokaryotic pantothenate kinase family.

It is found in the cytoplasm. The enzyme catalyses (R)-pantothenate + ATP = (R)-4'-phosphopantothenate + ADP + H(+). Its pathway is cofactor biosynthesis; coenzyme A biosynthesis; CoA from (R)-pantothenate: step 1/5. This is Pantothenate kinase from Shewanella pealeana (strain ATCC 700345 / ANG-SQ1).